The primary structure comprises 424 residues: Adenylyltransferase and sulfurtransferase UBA4 (424 aa).

ATP-binding positions include Gly-76, Asp-97, 104–108 (TNLHR), Lys-121, and 165–166 (DS). Residues Cys-206 and Cys-209 each contribute to the Zn(2+) site. The active-site Glycyl thioester intermediate; for adenylyltransferase activity is Cys-223. Cys-283 contacts Zn(2+). The region spanning 326-422 (RNSDHVLLDV…WYSEVDQNIP (97 aa)) is the Rhodanese domain. Cys-382 (cysteine persulfide intermediate; for sulfurtransferase activity) is an active-site residue.

This sequence in the N-terminal section; belongs to the HesA/MoeB/ThiF family. UBA4 subfamily. The cofactor is Zn(2+).

It localises to the cytoplasm. The protein resides in the cytosol. It functions in the pathway tRNA modification; 5-methoxycarbonylmethyl-2-thiouridine-tRNA biosynthesis. Plays a central role in 2-thiolation of mcm(5)S(2)U at tRNA wobble positions of cytosolic tRNA(Lys), tRNA(Glu) and tRNA(Gln). Acts by mediating the C-terminal thiocarboxylation of sulfur carrier URM1. Its N-terminus first activates URM1 as acyl-adenylate (-COAMP), then the persulfide sulfur on the catalytic cysteine is transferred to URM1 to form thiocarboxylation (-COSH) of its C-terminus. The reaction probably involves hydrogen sulfide that is generated from the persulfide intermediate and that acts as a nucleophile towards URM1. Subsequently, a transient disulfide bond is formed. Does not use thiosulfate as sulfur donor; NFS1 probably acting as a sulfur donor for thiocarboxylation reactions. Prior mcm(5) tRNA modification by the elongator complex is required for 2-thiolation. May also be involved in protein urmylation. This is Adenylyltransferase and sulfurtransferase UBA4 from Meyerozyma guilliermondii (strain ATCC 6260 / CBS 566 / DSM 6381 / JCM 1539 / NBRC 10279 / NRRL Y-324) (Yeast).